Here is a 405-residue protein sequence, read N- to C-terminus: Plasma serine protease inhibitor (405 aa).

The first 19 residues, 1–19 (MRFFPILCLVLFISHGVAS), serve as a signal peptide directing secretion. The propeptide at 20–24 (RRHSH) is removed in mature form. Asn-247 carries an N-linked (GlcNAc...) asparagine glycan.

Belongs to the serpin family. In terms of assembly, forms protease inhibiting heterodimers in extracellular body fluids with serine proteases such as activated protein C/coagulation factor V/F5, acrosin/ACR, chymotrypsinogen B/CTRB1, prothrombin/F2, factor Xa/F10, factor XI/F11, kallikrein/KLKB1, tissue kallikrein, trypsin/PRSS1, prostate specific antigen/KLK3, tissue plasminogen activator/PLAT and urinary plasminogen activator/PLAU. Forms membrane-anchored serine proteases inhibiting heterodimers with TMPRSS7 and TMPRSS11E. Interacts with SEMG2. Post-translationally, N-glycosylated; glycans consist of a mixture of sialylated bi- (including sialyl-Lewis X epitopes), tri- and tetra-antennary complex-type chains; affects the maximal heparin- and thrombomodulin-enhanced rates of thrombin inhibition. O-glycosylated; further modified with 2 sialic acid residues. Proteolytically cleaved at the N-terminus; inhibits slightly the heparin- and thrombomodulin-enhanced rates of thrombin inhibition. In terms of processing, proteolytically cleaved. Inhibition of proteases is accompanied by formation of a stable enzyme-inhibitor complex and by degradation of the serpin to lower molecular weight derivatives. Not detected in blood plasma (at protein level). Expressed in testis, epididymis, seminal vesicles, prostate and ovaries.

Its subcellular location is the secreted. It localises to the extracellular space. Its inhibitory activity is greatly enhanced in the presence of glycosaminoglycans, heparin, thrombomodulin and phospholipids vesicles. In terms of biological role, heparin-dependent serine protease inhibitor acting in body fluids and secretions. Inactivates serine proteases by binding irreversibly to their serine activation site. Involved in the regulation of intravascular and extravascular proteolytic activities. Plays hemostatic roles in the blood plasma. Acts as a procoagulant and pro-inflammatory factor by inhibiting the anticoagulant activated protein C factor as well as the generation of activated protein C factor by the thrombin/thrombomodulin complex. Acts as an anticoagulant factor by inhibiting blood coagulation factors like prothrombin, factor XI, factor Xa, plasma kallikrein and fibrinolytic enzymes such as tissue- and urinary-type plasminogen activators. In seminal plasma, inactivates several serine proteases implicated in the reproductive system. Inhibits the serpin acrosin; indirectly protects component of the male genital tract from being degraded by excessive released acrosin. Inhibits tissue- and urinary-type plasminogen activator, prostate-specific antigen and kallikrein activities; has a control on the sperm motility and fertilization. Inhibits the activated protein C-catalyzed degradation of SEMG1 and SEMG2; regulates the degradation of semenogelin during the process of transfer of spermatozoa from the male reproductive tract into the female tract. In urine, inhibits urinary-type plasminogen activator and kallikrein activities. Inactivates membrane-anchored serine proteases activities such as MPRSS7 and TMPRSS11E. Inhibits urinary-type plasminogen activator-dependent tumor cell invasion and metastasis. May also play a non-inhibitory role in seminal plasma and urine as a hydrophobic hormone carrier by its binding to retinoic acid. This is Plasma serine protease inhibitor (Serpina5) from Mus musculus (Mouse).